The following is an 83-amino-acid chain: Exodeoxyribonuclease 7 small subunit (83 aa).

A disordered region spans residues 63-83 (VQNDDGTTGTEPLADTGESGR).

This sequence belongs to the XseB family. Heterooligomer composed of large and small subunits.

Its subcellular location is the cytoplasm. The enzyme catalyses Exonucleolytic cleavage in either 5'- to 3'- or 3'- to 5'-direction to yield nucleoside 5'-phosphates.. Functionally, bidirectionally degrades single-stranded DNA into large acid-insoluble oligonucleotides, which are then degraded further into small acid-soluble oligonucleotides. This Gluconobacter oxydans (strain 621H) (Gluconobacter suboxydans) protein is Exodeoxyribonuclease 7 small subunit.